The sequence spans 383 residues: WD repeat-containing protein 55 (383 aa).

Residues 1–11 (MDRTCEERPAE) show a composition bias toward basic and acidic residues. The segment at 1–33 (MDRTCEERPAEDGSDEEDPDSMEAPTRIRDTPE) is disordered. Acidic residues predominate over residues 12–21 (DGSDEEDPDS). S14 bears the Phosphoserine mark. 7 WD repeats span residues 36-75 (VLEAPASGLAFHPARDLLAAGDVDGDVFVFSYSCQEGETK), 82-121 (HHLKACRAVAFSEDGQKLITVSKDKAIHVLDVEQGQLERR), 125-163 (AHGAPINSLLLVDENVLATGDDTGGICLWDQRKEGPLMD), 166-205 (QHEEYIADMALDPAKKLLLTASGDGCLGIFNIKRRRFELL), 208-247 (PQSGDLTSVTLMKWGKKVACGSSEGTIYLFNWNGFGATSD), 250-289 (ALRAESIDCMVPVTESLLCTGSTDGVIRAVNILPNRVVGS), and 293-332 (HTGEPVEELALSHCGRFLASSGHDQRLKFWDMAQLRAVVV). Phosphoserine is present on S354. The tract at residues 363–383 (REEGEDSMAQEEKEETGDDSD) is disordered. The segment covering 365 to 383 (EGEDSMAQEEKEETGDDSD) has biased composition (acidic residues). T378 carries the post-translational modification Phosphothreonine. The residue at position 382 (S382) is a Phosphoserine.

The protein belongs to the WD repeat WDR55 family.

The protein localises to the nucleus. It localises to the nucleolus. The protein resides in the cytoplasm. In terms of biological role, nucleolar protein that acts as a modulator of rRNA synthesis. Plays a central role during organogenesis. The protein is WD repeat-containing protein 55 (WDR55) of Homo sapiens (Human).